Reading from the N-terminus, the 347-residue chain is Heat-inducible transcription repressor HrcA (347 aa).

It belongs to the HrcA family.

Functionally, negative regulator of class I heat shock genes (grpE-dnaK-dnaJ and groELS operons). Prevents heat-shock induction of these operons. In Nocardia farcinica (strain IFM 10152), this protein is Heat-inducible transcription repressor HrcA.